A 1214-amino-acid polypeptide reads, in one-letter code: Lysine-specific demethylase 3A (1214 aa).

A phosphoserine mark is found at serine 150 and serine 209. Residues 194-211 are compositionally biased toward polar residues; that stretch reads TPSSNRQQNTPQAANSPP. Disordered regions lie at residues 194 to 215, 271 to 293, and 310 to 398; these read TPSS…NIGA, PKGS…STPQ, and KAEL…KSVL. A Phosphoserine modification is found at serine 330. Positions 361–370 are enriched in polar residues; it reads LGSQSQNLKE. Over residues 371-380 the composition is skewed to basic and acidic residues; the sequence is TSVKVDHDSC. A compositionally biased stretch (polar residues) spans 381–391; sequence CTRSSNKTQTP. The C6-type zinc finger occupies 546-571; sequence CDVCDTTIFNLHWVCPRCGFGVCVDC. The LXXLL motif motif lies at 769 to 773; that stretch reads LRNLL. N6-acetyllysine is present on lysine 779. The JmjC domain maps to 944-1167; sequence MPSRFDDLMA…HCFWLTQEFR (224 aa). Residues histidine 1006, aspartate 1008, and histidine 1135 each contribute to the Fe cation site.

The protein belongs to the JHDM2 histone demethylase family. As to quaternary structure, interacts with VRK1. It depends on Fe(2+) as a cofactor. In terms of tissue distribution, testis specific. Expressed only in male germ cells.

It localises to the cytoplasm. Its subcellular location is the nucleus. It catalyses the reaction N(6),N(6)-dimethyl-L-lysyl(9)-[histone H3] + 2 2-oxoglutarate + 2 O2 = L-lysyl(9)-[histone H3] + 2 formaldehyde + 2 succinate + 2 CO2. In terms of biological role, histone demethylase that specifically demethylates 'Lys-9' of histone H3, thereby playing a central role in histone code. Preferentially demethylates mono- and dimethylated H3 'Lys-9' residue, with a preference for dimethylated residue, while it has weak or no activity on trimethylated H3 'Lys-9'. Demethylation of Lys residue generates formaldehyde and succinate. Involved in hormone-dependent transcriptional activation, by participating in recruitment to androgen-receptor target genes, resulting in H3 'Lys-9' demethylation and transcriptional activation. Involved in spermatogenesis by regulating expression of target genes such as PRM1 and TNP1 which are required for packaging and condensation of sperm chromatin. Directly regulates expression of PPARA and UCP1 and is involved in obesity resistance. The protein is Lysine-specific demethylase 3A (Kdm3a) of Rattus norvegicus (Rat).